Consider the following 162-residue polypeptide: UPF0178 protein Rsph17029_2512 (162 aa).

It belongs to the UPF0178 family.

The chain is UPF0178 protein Rsph17029_2512 from Cereibacter sphaeroides (strain ATCC 17029 / ATH 2.4.9) (Rhodobacter sphaeroides).